Here is a 112-residue protein sequence, read N- to C-terminus: UPF0060 membrane protein CMS0846 (112 aa).

The next 4 helical transmembrane spans lie at 6–26 (VILFALAAVAEIGGAWLIWQA), 32–52 (PFWWAGLGVMALGAYGFIATL), 61–81 (ILAAYGGVFVAGSLLWGTVVD), and 87–107 (RWDVIGAVVCLVGVAVIMAAP).

This sequence belongs to the UPF0060 family.

It is found in the cell membrane. The polypeptide is UPF0060 membrane protein CMS0846 (Clavibacter sepedonicus (Clavibacter michiganensis subsp. sepedonicus)).